Reading from the N-terminus, the 710-residue chain is Nucleolin (710 aa).

The segment at 1 to 303 (MVKLAKAGKN…KKQKVEGTEP (303 aa)) is disordered. Residues lysine 9, lysine 15, and lysine 16 each carry the N6-acetyllysine modification. Over residues 24–43 (VEEDSEDEEMSEDEEDDSSG) the composition is skewed to acidic residues. Phosphoserine is present on residues serine 28, serine 34, serine 41, and serine 42. A compositionally biased stretch (low complexity) spans 56–107 (AAATSAKKVVVSPTKKVAVATPAKKAAVTPGKKAAATPAKKTVTPAKAVTTP). The stretch at 58–65 (ATSAKKVV) is repeat 1. Residues 58–135 (ATSAKKVVVS…GAAIPAKGAK (78 aa)) are 8 X 8 AA tandem repeats of X-T-P-X-K-K-X-X. Serine 67 is modified (phosphoserine). Residues threonine 69, threonine 76, threonine 84, and threonine 92 each carry the phosphothreonine modification. 3 repeat units span residues 75-82 (ATPAKKAA), 83-90 (VTPGKKAA), and 91-98 (ATPAKKTV). The residue at position 96 (lysine 96) is an N6-acetyllysine. Phosphothreonine is present on threonine 99. A 5; truncated repeat occupies 99-104 (TPAKAV). N6-acetyllysine is present on lysine 102. Repeat unit 6 spans residues 105-112 (TTPGKKGA). Position 106 is a phosphothreonine (threonine 106). Lysine 109 is modified (N6-acetyllysine). At threonine 113 the chain carries Phosphothreonine. An N6-acetyllysine modification is found at lysine 116. 2 repeat units span residues 120 to 127 (ATPGKKGA) and 128 to 135 (AIPAKGAK). Threonine 121 carries the phosphothreonine modification. The span at 122-137 (PGKKGAAIPAKGAKNG) shows a compositional bias: low complexity. N6-acetyllysine is present on lysine 124. Phosphoserine occurs at positions 145 and 153. Residues 145-171 (SDEEEDDDSEEDEEDDEDEDEDEDEIE) show a composition bias toward acidic residues. The span at 172–183 (PAAMKAAAAAPA) shows a compositional bias: low complexity. 2 positions are modified to phosphoserine: serine 184 and serine 206. Positions 184 to 211 (SEDEDDEDDEDDEDDDDDEEDDSEEEAM) are enriched in acidic residues. Phosphothreonine is present on threonine 214. A compositionally biased stretch (acidic residues) spans 234–272 (EDEDEEEDDEDEDDDDDEDDEDDDDEDDEEEEEEEEEEP). Over residues 273-300 (VKEAPGKRKKEMAKQKAAPEAKKQKVEG) the composition is skewed to basic and acidic residues. Residue lysine 297 forms a Glycyl lysine isopeptide (Lys-Gly) (interchain with G-Cter in SUMO1); alternate linkage. Lysine 297 is covalently cross-linked (Glycyl lysine isopeptide (Lys-Gly) (interchain with G-Cter in SUMO2); alternate). Phosphothreonine is present on threonine 301. RRM domains follow at residues 307–383 (FNLF…KPKG) and 393–466 (RTLL…YTGE). Lysine 318 bears the N6-acetyllysine mark. Lysine 324 is covalently cross-linked (Glycyl lysine isopeptide (Lys-Gly) (interchain with G-Cter in SUMO1); alternate). A Glycyl lysine isopeptide (Lys-Gly) (interchain with G-Cter in SUMO2); alternate cross-link involves residue lysine 324. Lysine 348 is subject to N6-acetyllysine. At serine 356 the chain carries Phosphoserine. Threonine 367 carries the post-translational modification Phosphothreonine. A Glycyl lysine isopeptide (Lys-Gly) (interchain with G-Cter in SUMO2) cross-link involves residue lysine 370. Lysine 377 participates in a covalent cross-link: Glycyl lysine isopeptide (Lys-Gly) (interchain with G-Cter in SUMO2); alternate. Lysine 377 bears the N6-acetyllysine; alternate mark. 2 positions are modified to N6-acetyllysine: lysine 398 and lysine 403. Threonine 405 bears the Phosphothreonine mark. N6-acetyllysine occurs at positions 427 and 444. 2 positions are modified to phosphoserine: serine 458 and serine 460. An N6-acetyllysine mark is found at lysine 467 and lysine 477. The 75-residue stretch at 486 to 560 (KTLVLSNLSY…RAIRLELQGP (75 aa)) folds into the RRM 3 domain. Lysine 513 participates in a covalent cross-link: Glycyl lysine isopeptide (Lys-Gly) (interchain with G-Cter in SUMO2); alternate. N6-acetyllysine; alternate is present on lysine 513. N6-acetyllysine is present on lysine 521. Serine 563 carries the phosphoserine modification. Lysine 572 carries the post-translational modification N6-acetyllysine. One can recognise an RRM 4 domain in the interval 572–647 (KTLFVKGLSE…NKVTLDWAKP (76 aa)). A Glycyl lysine isopeptide (Lys-Gly) (interchain with G-Cter in SUMO2); alternate cross-link involves residue lysine 577. Lysine 577 is modified (N6-acetyllysine; alternate). Serine 580 carries the post-translational modification Phosphoserine. A Glycyl lysine isopeptide (Lys-Gly) (interchain with G-Cter in SUMO1); alternate cross-link involves residue lysine 589. Lysine 589 is covalently cross-linked (Glycyl lysine isopeptide (Lys-Gly) (interchain with G-Cter in SUMO2); alternate). 2 positions are modified to phosphoserine: serine 591 and serine 619. A Glycyl lysine isopeptide (Lys-Gly) (interchain with G-Cter in SUMO2) cross-link involves residue lysine 624. Positions 640–710 (VTLDWAKPKG…KPQGKKTKFE (71 aa)) are disordered. Lysine 646 is subject to N6-acetyllysine. The segment covering 650 to 696 (EGGFGGRGGGRGGFGGRGGGRGGRGGFGGRGRGGFGGRGGFRGGRGG) has biased composition (gly residues). Asymmetric dimethylarginine occurs at positions 656, 660, 666, 670, 673, 679, 681, 687, and 691. Arginine 694 bears the Asymmetric dimethylarginine; alternate mark. The residue at position 694 (arginine 694) is an Omega-N-methylarginine; alternate. Basic and acidic residues predominate over residues 697–710 (GGDHKPQGKKTKFE).

In terms of assembly, identified in a IGF2BP1-dependent mRNP granule complex containing untranslated mRNAs. Component of the SWAP complex that consists of NPM1, NCL/nucleolin, PARP1 and SWAP70. Component of a complex which is at least composed of HTATSF1/Tat-SF1, the P-TEFb complex components CDK9 and CCNT1, RNA polymerase II, SUPT5H, and NCL/nucleolin. Interacts with AICDA. Interacts with APTX. Interacts with C1QBP. Interacts with ERBB4. Interacts (via C-terminus) with FMR1 isoform 6 (via N-terminus). Interacts with GZF1; this interaction is important for nucleolar localization of GZF1. Interacts with NSUN2. Interacts with NVL. Interacts (via N-terminus domain) with SETX. Interacts (via RRM1 and C-terminal RRM4/Arg/Gly-rich domains) with TERT; the interaction is important for nucleolar localization of TERT. Interacts with WDR46. Interacts with ZFP36. Interacts with LRRC34. Interacts with RRP1B. Interacts with HNRNPU; this interaction occurs during mitosis. Interacts with RIOK1; RIOK1 recruits NCL to PRMT5 for symmetrically methylation. Interacts with ZBTB7B. Interacts with MDK; this interaction promotes NCL clustering and lateral movements of this complex into lipid rafts leading to MDK internalization. Interacts with HDGF (isoform 1). Interacts with ALKBH2. Interacts with IGFBP5; this interaction is necessary for IGFBP5 localization to the nucleus. Interacts with DDX24 (when ubiquitinated); this interaction may be important during ribosome biogenesis. In terms of processing, some glutamate residues are glycylated by TTLL8. This modification occurs exclusively on glutamate residues and results in a glycine chain on the gamma-carboxyl group. Symmetrically methylated by PRMT5.

The protein localises to the nucleus. Its subcellular location is the nucleolus. The protein resides in the cytoplasm. In terms of biological role, nucleolin is the major nucleolar protein of growing eukaryotic cells. It is found associated with intranucleolar chromatin and pre-ribosomal particles. It induces chromatin decondensation by binding to histone H1. It is thought to play a role in pre-rRNA transcription and ribosome assembly. May play a role in the process of transcriptional elongation. Binds RNA oligonucleotides with 5'-UUAGGG-3' repeats more tightly than the telomeric single-stranded DNA 5'-TTAGGG-3' repeats. In Homo sapiens (Human), this protein is Nucleolin (NCL).